We begin with the raw amino-acid sequence, 833 residues long: F1 capsule-anchoring protein (833 aa).

An N-terminal signal peptide occupies residues 1–25; that stretch reads MRYSKLFLCAGLTLATLPCWGRAYT. Cys-807 and Cys-829 form a disulfide bridge.

The protein belongs to the fimbrial export usher family.

Its subcellular location is the cell outer membrane. Its function is as follows. A probable role in capsular biogenesis. It is likely that the caf1A molecule binds F1 antigen subunits during the extracellular secretion process. The polypeptide is F1 capsule-anchoring protein (caf1A) (Yersinia pestis).